Consider the following 353-residue polypeptide: G-protein complex alpha subunit gpaA (353 aa).

The disordered stretch occupies residues 1–25 (MGCGMSTEDKEGKARNEEIENQLKR). Basic and acidic residues predominate over residues 7–25 (TEDKEGKARNEEIENQLKR). Residues 32–353 (NEIKMLLLGA…QENLRLCGLI (322 aa)) form the G-alpha domain. The G1 motif stretch occupies residues 35–48 (KMLLLGAGESGKST). 2 residues coordinate a divalent metal cation: S47 and T181. Positions 173 to 181 (DVLRSRVKT) are G2 motif. Residues 196 to 205 (YRMFDVGGQR) form a G3 motif region. Residues 265–272 (ILFLNKID) form a G4 motif region. The interval 323 to 328 (TCATDT) is G5 motif.

This sequence belongs to the G-alpha family. G(q) subfamily. As to quaternary structure, g proteins are composed of 3 units; alpha, beta and gamma. The alpha chain contains the guanine nucleotide binding site. Interacts with gprM.

Functionally, G-protein complex alpha subunit that plays a role in conidiation and regulation of the biosynthesis of secondary metabolites such as dihydroxynaphthalene (DHN)-melanin, via interaction with the G protein-coupled receptor gprM. This is G-protein complex alpha subunit gpaA from Aspergillus fumigatus (strain CBS 144.89 / FGSC A1163 / CEA10) (Neosartorya fumigata).